The chain runs to 78 residues: Small ribosomal subunit protein bS18 (78 aa).

The protein belongs to the bacterial ribosomal protein bS18 family. As to quaternary structure, part of the 30S ribosomal subunit. Forms a tight heterodimer with protein bS6.

Binds as a heterodimer with protein bS6 to the central domain of the 16S rRNA, where it helps stabilize the platform of the 30S subunit. The polypeptide is Small ribosomal subunit protein bS18 (Levilactobacillus brevis (strain ATCC 367 / BCRC 12310 / CIP 105137 / JCM 1170 / LMG 11437 / NCIMB 947 / NCTC 947) (Lactobacillus brevis)).